The primary structure comprises 64 residues: Chassatide C7 (64 aa).

Positions 1-35 (VLVASLVMLEAQSSDTIQVPDWGKRLLMNHDSNRV) are cleaved as a propeptide — removed in mature form. 3 disulfide bridges follow: Cys-39–Cys-55, Cys-43–Cys-57, and Cys-48–Cys-62.

Expressed in fruit, pedicel, root and stem but not in leaf (at protein level).

Probably participates in a plant defense mechanism. Active against E.coli ATTC25922 but not against S.aureus ATCC 12600 or S.epidermidis ATCC 14990. Has cytotoxic and hemolytic activity. In Chassalia chartacea (Chassalia curviflora), this protein is Chassatide C7.